The sequence spans 544 residues: Chaperonin GroEL 1 (544 aa).

Residues T29–P32, D86–T90, G413, N476–A478, and D492 each bind ATP. A disordered region spans residues E523 to M544. Residues A529–M544 are compositionally biased toward gly residues.

Belongs to the chaperonin (HSP60) family. As to quaternary structure, forms a cylinder of 14 subunits composed of two heptameric rings stacked back-to-back. Interacts with the co-chaperonin GroES.

It localises to the cytoplasm. It catalyses the reaction ATP + H2O + a folded polypeptide = ADP + phosphate + an unfolded polypeptide.. Its function is as follows. Together with its co-chaperonin GroES, plays an essential role in assisting protein folding. The GroEL-GroES system forms a nano-cage that allows encapsulation of the non-native substrate proteins and provides a physical environment optimized to promote and accelerate protein folding. In Cutibacterium acnes (strain DSM 16379 / KPA171202) (Propionibacterium acnes), this protein is Chaperonin GroEL 1.